A 511-amino-acid polypeptide reads, in one-letter code: 2,3-bisphosphoglycerate-independent phosphoglycerate mutase (511 aa).

Residues Asp14 and Ser64 each contribute to the Mn(2+) site. Ser64 functions as the Phosphoserine intermediate in the catalytic mechanism. Residues His125, 155–156, Arg187, Arg193, 259–262, and Lys333 contribute to the substrate site; these read RD and RADR. Asp400, His404, Asp441, His442, and His460 together coordinate Mn(2+).

It belongs to the BPG-independent phosphoglycerate mutase family. Monomer. Mn(2+) is required as a cofactor.

The enzyme catalyses (2R)-2-phosphoglycerate = (2R)-3-phosphoglycerate. It functions in the pathway carbohydrate degradation; glycolysis; pyruvate from D-glyceraldehyde 3-phosphate: step 3/5. Functionally, catalyzes the interconversion of 2-phosphoglycerate and 3-phosphoglycerate. The chain is 2,3-bisphosphoglycerate-independent phosphoglycerate mutase from Pseudomonas entomophila (strain L48).